A 156-amino-acid polypeptide reads, in one-letter code: Small ribosomal subunit protein uS7 (156 aa).

It belongs to the universal ribosomal protein uS7 family. Part of the 30S ribosomal subunit. Contacts proteins S9 and S11.

In terms of biological role, one of the primary rRNA binding proteins, it binds directly to 16S rRNA where it nucleates assembly of the head domain of the 30S subunit. Is located at the subunit interface close to the decoding center, probably blocks exit of the E-site tRNA. This chain is Small ribosomal subunit protein uS7, found in Proteus mirabilis (strain HI4320).